The sequence spans 157 residues: Transcriptional repressor NrdR (157 aa).

The segment at cysteine 3–cysteine 34 is a zinc-finger region. Residues leucine 49–aspartate 139 enclose the ATP-cone domain.

Belongs to the NrdR family. Zn(2+) serves as cofactor.

In terms of biological role, negatively regulates transcription of bacterial ribonucleotide reductase nrd genes and operons by binding to NrdR-boxes. This is Transcriptional repressor NrdR from Caulobacter sp. (strain K31).